Here is an 863-residue protein sequence, read N- to C-terminus: Potassium/sodium hyperpolarization-activated cyclic nucleotide-gated channel 2 (863 aa).

Gly residues predominate over residues 1–10 (MDARGGGGRP). Residues 1–131 (MDARGGGGRP…AGPAGEPRGS (131 aa)) form a disordered region. The Cytoplasmic portion of the chain corresponds to 1 to 188 (MDARGGGGRP…PYSDFRFYWD (188 aa)). A compositionally biased stretch (pro residues) spans 17-47 (TPAPGPPPPPPPPAPPQPQPPPAPPPNPTTP). A compositionally biased stretch (low complexity) spans 106–128 (GAASGPAAAEEAGSEEAGPAGEP). 2 positions are modified to phosphoserine: Ser119 and Ser134. Residues 131 to 182 (SQASFLQRQFGALLQPGVNKFSLRMFGSQKAVEREQERVKSAGAWIIHPYSD) form an involved in subunit assembly region. A helical membrane pass occupies residues 189 to 209 (FTMLLFMVGNLIIIPVGITFF). Over 210 to 213 (KDET) the chain is Extracellular. Residues 214–234 (TAPWIVFNVVSDTFFLMDLVL) traverse the membrane as a helical segment. At 235-261 (NFRTGIVIEDNTEIILDPEKIKKKYLR) the chain is on the cytoplasmic side. The chain crosses the membrane as a helical span at residues 262 to 282 (TWFVVDFVSSIPVDYIFLIVE). Residues 283-290 (KGIDSEVY) lie on the Extracellular side of the membrane. Residues 291–311 (KTARALRIVRFTKILSLLRLL) form a helical; Voltage-sensor membrane-spanning segment. The Cytoplasmic segment spans residues 312-342 (RLSRLIRYIHQWEEIFHMTYDLASAVMRICN). The helical transmembrane segment at 343–363 (LISMMLLLCHWDGCLQFLVPM) threads the bilayer. Residues 364–386 (LQDFPSDCWVSINNMVNHSWSEL) lie on the Extracellular side of the membrane. Asn380 carries N-linked (GlcNAc...) asparagine glycosylation. An intramembrane region (pore-forming) is located at residues 387–408 (YSFALFKAMSHMLCIGYGRQAP). At 409–413 (ESMTD) the chain is on the extracellular side. A helical transmembrane segment spans residues 414-434 (IWLTMLSMIVGATCYAMFIGH). The Cytoplasmic segment spans residues 435–863 (ATALIQSLDS…SARSRLSSNL (429 aa)). Positions 581, 582, 584, 591, 592, and 632 each coordinate 3',5'-cyclic AMP. At Ser641 the chain carries Phosphoserine; by PKG/PRKG2. Ser726 bears the Phosphoserine mark. At Arg728 the chain carries Omega-N-methylarginine. Residues 730–863 (VRRAPPGPLP…SARSRLSSNL (134 aa)) form a disordered region. Residues 734-755 (PPGPLPPAASPGPPAASPPAAP) show a composition bias toward pro residues. Ser743, Ser750, and Ser757 each carry phosphoserine. Low complexity-rich tracts occupy residues 756–765 (SSPRAPRTSP) and 778–834 (PALP…AAPS). Ser840, Ser842, and Ser847 each carry phosphoserine.

The protein belongs to the potassium channel HCN family. Homotetramer. The channel is composed of a homo- or heterotetrameric complex of pore-forming subunits. Heterotetramer with HCN1. Forms an obligate 4:4 complex with accessory subunit PEX5L. Interacts with KCNE2. Phosphorylation at Ser-641 by PRKG2 shifts the voltage-dependence to more negative voltages, hence counteracting the stimulatory effect of cGMP on gating. Post-translationally, N-glycosylated; required for cell surface trafficking of HCN2. In terms of processing, S-palmitoylated. Highly expressed in neonatal and adult ventricle and in brain. Highly expressed in the pyramidal layer in hippocampus, in anterior dorsal nucleus in thalamus, in the mammillary nucleus in hypothalamus, in red nucleus, in trigeminal mesencephalic, spinal and principal nuclei, in cochlear and trapezoid nuclei and in the dorsal tegemental nucleus.

It localises to the cell membrane. The catalysed reaction is Na(+)(in) = Na(+)(out). It carries out the reaction K(+)(in) = K(+)(out). The enzyme catalyses NH4(+)(in) = NH4(+)(out). Its activity is regulated as follows. Activated by cAMP, and at 10-100 times higher concentrations, also by cGMP. cAMP binding causes a conformation change that leads to the assembly of an active tetramer and channel opening. In the absence of cAMP, the C-terminal region is thought to exert a tonic inhibition on the pore when HCN2 is in a non-tetrameric form. Channel activity is modulated by intracellular chloride ions and pH; acidic pH shifts the activation to more negative voltages. Phosphatidylinositol-4,5- bisphosphate (PIP(2)) acts as a ligand that allosterically opens HCN2 by shifting voltage-dependent channel activation toward depolarized potentials. Inhibited by extracellular cesium ions. Its function is as follows. Hyperpolarization-activated ion channel exhibiting weak selectivity for potassium over sodium ions. Contributes to the native pacemaker currents in heart (If) and in neurons (Ih). Can also transport ammonium in the distal nephron. Involved in the initiation of neuropathic pain in sensory neurons. Produces a large instantaneous current. This is Potassium/sodium hyperpolarization-activated cyclic nucleotide-gated channel 2 (Hcn2) from Rattus norvegicus (Rat).